The following is a 440-amino-acid chain: tRNA modification GTPase MnmE (440 aa).

3 residues coordinate (6S)-5-formyl-5,6,7,8-tetrahydrofolate: Arg-22, Glu-79, and Lys-118. Residues 214–366 enclose the TrmE-type G domain; sequence GLIFTILGKP…LKTMLEAEAR (153 aa). Residues 224-229, 243-249, and 268-271 each bind GTP; these read NAGKSS, SSQPGTT, and DTAG. The Mg(2+) site is built by Ser-228 and Thr-249. Position 440 (Lys-440) interacts with (6S)-5-formyl-5,6,7,8-tetrahydrofolate.

The protein belongs to the TRAFAC class TrmE-Era-EngA-EngB-Septin-like GTPase superfamily. TrmE GTPase family. As to quaternary structure, homodimer. Heterotetramer of two MnmE and two MnmG subunits. The cofactor is K(+).

It is found in the cytoplasm. Its function is as follows. Exhibits a very high intrinsic GTPase hydrolysis rate. Involved in the addition of a carboxymethylaminomethyl (cmnm) group at the wobble position (U34) of certain tRNAs, forming tRNA-cmnm(5)s(2)U34. This chain is tRNA modification GTPase MnmE, found in Granulibacter bethesdensis (strain ATCC BAA-1260 / CGDNIH1).